Here is an 85-residue protein sequence, read N- to C-terminus: Protein BTH_I0359 (85 aa).

This Burkholderia thailandensis (strain ATCC 700388 / DSM 13276 / CCUG 48851 / CIP 106301 / E264) protein is Protein BTH_I0359.